The following is a 541-amino-acid chain: Metal transporter Nramp6 (541 aa).

Low complexity predominate over residues 1-18 (MAPLPAAATATASSAATP). The disordered stretch occupies residues 1–44 (MAPLPAAATATASSAATPADDEAHSLLPSTPSNEEDDDDLEERA). 12 helical membrane-spanning segments follow: residues 87–107 (LWLF…PGNL), 120–140 (TLLW…LLAA), 172–192 (VAMV…IKIL), 196–216 (FLPL…FLSL), 224–244 (LEAV…WMFT), 270–290 (AVGV…SALV), 316–336 (IALA…AKGF), 358–378 (FGGG…AAGQ), 404–424 (IRSL…ALFF), 436–456 (WLNV…ITLV), 474–494 (VTWT…LDFF), and 502–522 (LSGS…LYLI).

It belongs to the NRAMP (TC 2.A.55) family.

Its subcellular location is the membrane. Probable metal transporter. The polypeptide is Metal transporter Nramp6 (NRAMP6) (Oryza sativa subsp. japonica (Rice)).